The primary structure comprises 393 residues: Isocitrate dehydrogenase [NAD] subunit gamma, mitochondrial (393 aa).

The N-terminal 39 residues, 1 to 39, are a transit peptide targeting the mitochondrion; that stretch reads MALKVATVAGSAAKAVLGPALLCRPWEVLGAHEVPSRNI. Citrate contacts are provided by Thr120 and Asn133. Residues Arg136, Arg167, and Asp254 each contribute to the substrate site. Residue Asp254 participates in Mn(2+) binding. 3 residues coordinate ADP: Asn312, Thr313, and Asn324.

The protein belongs to the isocitrate and isopropylmalate dehydrogenases family. As to quaternary structure, heterooligomer of subunits alpha (IDH3A), beta (IDH3B), and gamma (IDH3G) in the apparent ratio of 2:1:1. The heterodimer containing one IDH3A and one IDH3B subunit and the heterodimer containing one IDH3A and one IDH3G subunit assemble into a heterotetramer (which contains two subunits of IDH3A, one of IDH3B and one of IDH3G) and further into the heterooctamer. The cofactor is Mg(2+). Mn(2+) serves as cofactor.

The protein resides in the mitochondrion. Its activity is regulated as follows. The heterotetramer and the heterodimer composed of IDH3A and IDH3G subunits can be allosterically activated by citrate (CIT) or/and ADP, and the two activators can act independently or synergistically. The heterodimer composed of IDH3A and IDH3B subunits cannot be allosterically regulated and the allosteric regulation of the heterotetramer is through the IDH3G subunit and not the IDH3B subunit. The IDH3G subunit contains the allosteric site which consists of a CIT-binding site and an ADP-binding site, and the binding of CIT and ADP causes conformational changes at the allosteric site which are transmitted to the active site in the catalytic subunit (IDH3A) through a cascade of conformational changes at the heterodimer interface, leading to stabilization of the isocitrate-binding at the active site and thus activation of the enzyme. ATP can activate the heterotetramer and the heterodimer composed of IDH3A and IDH3G subunits at low concentrations but inhibits their activities at high concentrations, whereas ATP exhibits only inhibitory effect on the heterodimer composed of IDH3A and IDH3B subunits. Its function is as follows. Regulatory subunit which plays a role in the allosteric regulation of the enzyme catalyzing the decarboxylation of isocitrate (ICT) into alpha-ketoglutarate. The heterodimer composed of the alpha (IDH3A) and beta (IDH3B) subunits and the heterodimer composed of the alpha (IDH3A) and gamma (IDH3G) subunits, have considerable basal activity but the full activity of the heterotetramer (containing two subunits of IDH3A, one of IDH3B and one of IDH3G) requires the assembly and cooperative function of both heterodimers. The chain is Isocitrate dehydrogenase [NAD] subunit gamma, mitochondrial (IDH3G) from Homo sapiens (Human).